The sequence spans 263 residues: Urease accessory protein UreH (263 aa).

The protein belongs to the UreD family. As to quaternary structure, ureH, UreF and UreG form a complex that acts as a GTP-hydrolysis-dependent molecular chaperone, activating the urease apoprotein by helping to assemble the nickel containing metallocenter of UreC. The UreE protein probably delivers the nickel.

The protein localises to the cytoplasm. Its function is as follows. Required for maturation of urease via the functional incorporation of the urease nickel metallocenter. This is Urease accessory protein UreH from Helicobacter acinonychis (strain Sheeba).